The primary structure comprises 149 residues: Transcriptional repressor NrdR (149 aa).

Residues 3–34 (CPFCSAVDTKVIDSRLVGEGSQVRRRRQCLVC) fold into a zinc finger. An ATP-cone domain is found at 49 to 139 (PRVIKSNEVR…VYRSFEDIRE (91 aa)).

Belongs to the NrdR family. Requires Zn(2+) as cofactor.

Its function is as follows. Negatively regulates transcription of bacterial ribonucleotide reductase nrd genes and operons by binding to NrdR-boxes. The polypeptide is Transcriptional repressor NrdR (Pectobacterium carotovorum subsp. carotovorum (strain PC1)).